The primary structure comprises 78 residues: ATP synthase subunit a (78 aa).

The next 3 helical transmembrane spans lie at 13–33, 35–55, and 57–77; these read LFGN…LGTS, FLGA…GMFI, and SLQA…KVEA.

This sequence belongs to the ATPase A chain family. F-type ATPases have 2 components, CF(1) - the catalytic core - and CF(0) - the membrane proton channel. CF(1) has five subunits: alpha(3), beta(3), gamma(1), delta(1), epsilon(1). CF(0) has three main subunits: a(1), b(2) and c(9-12). The alpha and beta chains form an alternating ring which encloses part of the gamma chain. CF(1) is attached to CF(0) by a central stalk formed by the gamma and epsilon chains, while a peripheral stalk is formed by the delta and b chains.

The protein resides in the cell membrane. Its function is as follows. Key component of the proton channel; it plays a direct role in the translocation of protons across the membrane. This chain is ATP synthase subunit a (atpB), found in Alkalihalobacillus alcalophilus (Bacillus alcalophilus).